We begin with the raw amino-acid sequence, 104 residues long: Flagellar hook-basal body complex protein FliE (104 aa).

The protein belongs to the FliE family.

Its subcellular location is the bacterial flagellum basal body. This is Flagellar hook-basal body complex protein FliE from Pectobacterium atrosepticum (strain SCRI 1043 / ATCC BAA-672) (Erwinia carotovora subsp. atroseptica).